A 110-amino-acid chain; its full sequence is Small ribosomal subunit protein uS10m (110 aa).

It belongs to the universal ribosomal protein uS10 family.

It is found in the mitochondrion. This chain is Small ribosomal subunit protein uS10m (RPS10), found in Pisum sativum (Garden pea).